Here is a 319-residue protein sequence, read N- to C-terminus: Glutathione synthetase (319 aa).

In terms of domain architecture, ATP-grasp spans 127–311 (KIFVTEFADL…VASLLWDAIE (185 aa)). An ATP-binding site is contributed by 153-209 (RNEMGDIILKPLYGNGGAGVFHSARDDRNFSSLLEMFGQMFREPYIAQEYLPDVRKG). Mg(2+) is bound by residues Glu282 and Asn284.

Belongs to the prokaryotic GSH synthase family. The cofactor is Mg(2+). It depends on Mn(2+) as a cofactor.

It carries out the reaction gamma-L-glutamyl-L-cysteine + glycine + ATP = glutathione + ADP + phosphate + H(+). The protein operates within sulfur metabolism; glutathione biosynthesis; glutathione from L-cysteine and L-glutamate: step 2/2. The chain is Glutathione synthetase from Agrobacterium fabrum (strain C58 / ATCC 33970) (Agrobacterium tumefaciens (strain C58)).